We begin with the raw amino-acid sequence, 298 residues long: GTPase Era (298 aa).

The Era-type G domain occupies 4 to 171; the sequence is KSGFVSVIGR…LKEALDYIPE (168 aa). The segment at 12-19 is G1; the sequence is GRPNVGKS. 12-19 lines the GTP pocket; the sequence is GRPNVGKS. A G2 region spans residues 38–42; sequence QTTRN. Residues 59–62 form a G3 region; it reads DTPG. GTP contacts are provided by residues 59-63 and 121-124; these read DTPGI and NKVD. The interval 121 to 124 is G4; that stretch reads NKVD. The G5 stretch occupies residues 150 to 152; that stretch reads ISA. One can recognise a KH type-2 domain in the interval 202–279; it reads LDDEVPHGVG…FLELWVKVKP (78 aa).

This sequence belongs to the TRAFAC class TrmE-Era-EngA-EngB-Septin-like GTPase superfamily. Era GTPase family. As to quaternary structure, monomer.

It is found in the cytoplasm. The protein resides in the cell membrane. In terms of biological role, an essential GTPase that binds both GDP and GTP, with rapid nucleotide exchange. Plays a role in 16S rRNA processing and 30S ribosomal subunit biogenesis and possibly also in cell cycle regulation and energy metabolism. The chain is GTPase Era from Ruminiclostridium cellulolyticum (strain ATCC 35319 / DSM 5812 / JCM 6584 / H10) (Clostridium cellulolyticum).